A 462-amino-acid chain; its full sequence is NAD-capped RNA hydrolase NUDT12 (462 aa).

3 ANK repeats span residues 11-40, 45-74, and 78-98; these read EIVT…SLLN, NGWT…DRSI, and SRQT…ANLL. Position 185 is an N6-succinyllysine (K185). Positions 284 and 287 each coordinate Zn(2+). K292 carries the N6-succinyllysine modification. Zn(2+)-binding residues include C302 and C307. Substrate is bound by residues Y318, 354–356, E370, E374, and E415; that span reads AGF. The 135-residue stretch at 319–453 folds into the Nudix hydrolase domain; it reads PRVDPVVIMQ…SRAIAHQLIK (135 aa). Mg(2+)-binding residues include A354, E370, E374, and E415. Residues 355-376 carry the Nudix box motif; that stretch reads GFIEPGETIEDAVRREVEEESG. The Microbody targeting signal signature appears at 460-462; it reads PNL.

Belongs to the Nudix hydrolase family. NudC subfamily. In terms of assembly, homodimer. Homodimerization is essential for its catalytic activity and protein stability. Interacts (via ANK repeats) with BLMH. Mg(2+) is required as a cofactor. Requires Zn(2+) as cofactor.

The protein resides in the cytoplasm. It is found in the peroxisome. It localises to the cytoplasmic granule. It catalyses the reaction a 5'-end NAD(+)-phospho-ribonucleoside in mRNA + H2O = a 5'-end phospho-adenosine-phospho-ribonucleoside in mRNA + beta-nicotinamide D-ribonucleotide + 2 H(+). The catalysed reaction is NAD(+) + H2O = beta-nicotinamide D-ribonucleotide + AMP + 2 H(+). It carries out the reaction NADH + H2O = reduced beta-nicotinamide D-ribonucleotide + AMP + 2 H(+). The enzyme catalyses NADPH + H2O = reduced beta-nicotinamide D-ribonucleotide + adenosine 2',5'-bisphosphate + 2 H(+). Its function is as follows. mRNA decapping enzyme that specifically removes the nicotinamide adenine dinucleotide (NAD) cap from a subset of mRNAs by hydrolyzing the diphosphate linkage to produce nicotinamide mononucleotide (NMN) and 5' monophosphate mRNA. The NAD-cap is present at the 5'-end of some RNAs; in contrast to the canonical N7 methylguanosine (m7G) cap, the NAD cap promotes mRNA decay. Preferentially acts on NAD-capped transcripts in response to nutrient stress. Also acts on free nicotinamide adenine dinucleotide molecules: hydrolyzes NAD(H) into NMN(H) and AMP, and NADPH into NMNH and 2',5'-ADP. May act to regulate the concentration of peroxisomal nicotinamide nucleotide cofactors required for oxidative metabolism in this organelle. Regulates the levels of circadian clock components PER1, PER2, PER3 and CRY2 in the liver. This Pongo abelii (Sumatran orangutan) protein is NAD-capped RNA hydrolase NUDT12.